The sequence spans 367 residues: Putative F-box protein At3g21120 (367 aa).

The 43-residue stretch at 1–43 (MHLPEDLVLEILSKVPAVSLARFRSTCRRWNALVVDGSFAKKH) folds into the F-box domain.

This chain is Putative F-box protein At3g21120, found in Arabidopsis thaliana (Mouse-ear cress).